Reading from the N-terminus, the 270-residue chain is Sulfur carrier protein FdhD (270 aa).

The active-site Cysteine persulfide intermediate is the Cys116. 253 to 258 (FAREGK) lines the Mo-bis(molybdopterin guanine dinucleotide) pocket.

Belongs to the FdhD family.

Its subcellular location is the cytoplasm. Functionally, required for formate dehydrogenase (FDH) activity. Acts as a sulfur carrier protein that transfers sulfur from IscS to the molybdenum cofactor prior to its insertion into FDH. This Haemophilus influenzae (strain ATCC 51907 / DSM 11121 / KW20 / Rd) protein is Sulfur carrier protein FdhD.